Reading from the N-terminus, the 347-residue chain is Heat-inducible transcription repressor HrcA (347 aa).

The protein belongs to the HrcA family.

Negative regulator of class I heat shock genes (grpE-dnaK-dnaJ and groELS operons). Prevents heat-shock induction of these operons. The sequence is that of Heat-inducible transcription repressor HrcA from Lactobacillus delbrueckii subsp. bulgaricus (strain ATCC BAA-365 / Lb-18).